A 366-amino-acid polypeptide reads, in one-letter code: Ribonuclease P protein subunit drpp30 (366 aa).

Residues 265-366 are disordered; sequence EDTQPTNNNI…DIDNNKRKRE (102 aa). The segment covering 275-290 has biased composition (basic and acidic residues); sequence PHEKHINKESTGKETI. Low complexity-rich tracts occupy residues 291 to 324 and 333 to 351; these read PKPT…TPSI and TAKS…AQKQ. Positions 352 to 366 are enriched in basic and acidic residues; that stretch reads GKMDIDIDNNKRKRE.

The protein belongs to the eukaryotic/archaeal RNase P protein component 3 family.

It is found in the nucleus. It carries out the reaction Endonucleolytic cleavage of RNA, removing 5'-extranucleotides from tRNA precursor.. Its function is as follows. Component of ribonuclease P, a protein complex that generates mature tRNA molecules by cleaving their 5'-ends. This is Ribonuclease P protein subunit drpp30 (drpp30) from Dictyostelium discoideum (Social amoeba).